A 276-amino-acid chain; its full sequence is Ribosomal RNA small subunit methyltransferase I (276 aa).

It belongs to the methyltransferase superfamily. RsmI family.

The protein localises to the cytoplasm. It catalyses the reaction cytidine(1402) in 16S rRNA + S-adenosyl-L-methionine = 2'-O-methylcytidine(1402) in 16S rRNA + S-adenosyl-L-homocysteine + H(+). Its function is as follows. Catalyzes the 2'-O-methylation of the ribose of cytidine 1402 (C1402) in 16S rRNA. The sequence is that of Ribosomal RNA small subunit methyltransferase I from Mycoplasma pneumoniae (strain ATCC 29342 / M129 / Subtype 1) (Mycoplasmoides pneumoniae).